Reading from the N-terminus, the 377-residue chain is MEDDGYNYYGADNQSECDYADWTPSGALIPAIYILVFLLGTTGNGLVLWTVFWSSREKRRSADIFIASLAVADLTFVVTLPLWATYTYREFDWPFGTFSCKLSSYLIFVNMYASVFCLTGLSFDRYLAIVRPVANARLRLRVSGAVATAVLWVLAALLAVPVMVFRSTDIPENSTKTQCYMDYSMVATSNSEWAWEVGLGVSSTAVGFVVPFIIMLTCYFFIAQTIAGHFRKERIEGLRKRRRLLSIIVVLVVTFALCWMPYHLVKTLYMLGNLLHWPCDFDSFLMNVFPYCTCISYVNSCLNPFLYAFFDPRFRRACTSMLCCDQSGCKGSPHSSSAEKSASYSSGHSQGPGPNMCKGGEPMHEKSIPYSQETLVD.

Residues Met-1–Leu-28 lie on the Extracellular side of the membrane. Asn-13 carries N-linked (GlcNAc...) asparagine glycosylation. 2 disulfide bridges follow: Cys-17–Cys-279 and Cys-100–Cys-179. A helical transmembrane segment spans residues Ile-29–Phe-52. Residues Trp-53–Ala-62 are Cytoplasmic-facing. The chain crosses the membrane as a helical span at residues Asp-63–Ala-84. Topologically, residues Thr-85 to Thr-97 are extracellular. A helical transmembrane segment spans residues Phe-98–Phe-123. Residues Asp-124–Gly-144 are Cytoplasmic-facing. The helical transmembrane segment at Ala-145 to Val-162 threads the bilayer. The Extracellular segment spans residues Met-163–Glu-196. Asn-173 carries an N-linked (GlcNAc...) asparagine glycan. Residues Val-197–Phe-221 traverse the membrane as a helical segment. Over Ile-222 to Leu-244 the chain is Cytoplasmic. Residues Leu-245–Leu-268 traverse the membrane as a helical segment. The Extracellular portion of the chain corresponds to Tyr-269–Asn-287. Residues Val-288–Phe-310 form a helical membrane-spanning segment. Over Asp-311 to Asp-377 the chain is Cytoplasmic. Residues Ser-335 to Ser-349 are compositionally biased toward low complexity. A disordered region spans residues Ser-335 to Asp-377.

Belongs to the G-protein coupled receptor 1 family. In terms of assembly, homodimer; dimerization inhibits APLNR-mediated G protein and beta-arrestin signaling pathways compared to monomeric APLNR. Widely expressed. Highest expression in the lung, lower in the heart, placenta, ovary, skeletal muscle, mammary gland, kidney and several structures in the brain as the hypothalamus (supraoptic and periventricular nuclei), pituitary, olfactory bulb and pineal gland.

The protein localises to the cell membrane. G protein-coupled receptor for peptide hormones apelin (APLN) and apelin receptor early endogenous ligand (APELA/ELA), that plays a role in the regulation of normal cardiovascular function and fluid homeostasis. When acting as apelin receptor, activates both G(i) protein pathway that inhibits adenylate cyclase activity, and the beta-arrestin pathway that promotes internalization of the receptor. APLNR/APJ also functions as mechanoreceptor that is activated by pathological stimuli in a G-protein-independent fashion to induce beta-arrestin signaling, hence eliciting cardiac hypertrophy. However, the presence of apelin ligand blunts cardiac hypertrophic induction from APLNR/APJ on response to pathological stimuli. Plays a key role in early development such as gastrulation, blood vessels formation and heart morphogenesis by acting as a APELA receptor. May promote angioblast migration toward the embryonic midline, i.e. the position of the future vessel formation, during vasculogenesis. Promotes sinus venosus (SV)-derived endothelial cells migration into the developing heart to promote coronary blood vessel development. Also plays a role in various processes in adults such as regulation of blood vessel formation, blood pressure, heart contractility and heart failure. The chain is Apelin receptor from Rattus norvegicus (Rat).